The following is a 368-amino-acid chain: Chaperone protein DnaJ (368 aa).

Residues 5 to 65 (DYYEVLGLTK…QKKARYDQFG (61 aa)) form the J domain. The CR-type zinc-finger motif lies at 125-207 (GKETEIEIPK…CRGEGKVQKR (83 aa)). Zn(2+) is bound by residues Cys-138, Cys-141, Cys-155, Cys-158, Cys-181, Cys-184, Cys-195, and Cys-198. CXXCXGXG motif repeat units follow at residues 138–145 (CETCHGSG), 155–162 (CSTCNGAG), 181–188 (CTTCHGTG), and 195–202 (CSTCRGEG).

The protein belongs to the DnaJ family. In terms of assembly, homodimer. It depends on Zn(2+) as a cofactor.

The protein resides in the cytoplasm. Its function is as follows. Participates actively in the response to hyperosmotic and heat shock by preventing the aggregation of stress-denatured proteins and by disaggregating proteins, also in an autonomous, DnaK-independent fashion. Unfolded proteins bind initially to DnaJ; upon interaction with the DnaJ-bound protein, DnaK hydrolyzes its bound ATP, resulting in the formation of a stable complex. GrpE releases ADP from DnaK; ATP binding to DnaK triggers the release of the substrate protein, thus completing the reaction cycle. Several rounds of ATP-dependent interactions between DnaJ, DnaK and GrpE are required for fully efficient folding. Also involved, together with DnaK and GrpE, in the DNA replication of plasmids through activation of initiation proteins. The sequence is that of Chaperone protein DnaJ from Lysinibacillus sphaericus (Bacillus sphaericus).